A 191-amino-acid polypeptide reads, in one-letter code: Casparian strip membrane protein 4 (191 aa).

At 1 to 27 (MKTGSVEAGEQASEDATPRRGKKLNRG) the chain is on the cytoplasmic side. Residues 28-48 (ILILDLVLRVFGAICTLGSAV) traverse the membrane as a helical segment. The Extracellular portion of the chain corresponds to 49–72 (AMGTTSQTLPSSSQFFRFRAKYND). Residues 73–93 (LPMFMFFAIANSIVCAYLVLS) form a helical membrane-spanning segment. At 94-110 (LRLSIFHIIRSAGIITR) the chain is on the cytoplasmic side. Residues 111 to 131 (IILVTFDMVMLVLLTCGASAA) traverse the membrane as a helical segment. Residues 132-160 (TSIVYLAHKGNASANWLPFCVRFSHFCNR) lie on the Extracellular side of the membrane. N-linked (GlcNAc...) asparagine glycosylation is present at Asn142. A helical transmembrane segment spans residues 161–181 (ISGSLIGSFFSIIIFMLLVIL). The Cytoplasmic portion of the chain corresponds to 182–191 (SAVSQFSICN).

Belongs to the Casparian strip membrane proteins (CASP) family. As to quaternary structure, homodimer and heterodimers.

It localises to the cell membrane. Its function is as follows. Regulates membrane-cell wall junctions and localized cell wall deposition. Required for establishment of the Casparian strip membrane domain (CSD) and the subsequent formation of Casparian strips, a cell wall modification of the root endodermis that determines an apoplastic barrier between the intraorganismal apoplasm and the extraorganismal apoplasm and prevents lateral diffusion. The chain is Casparian strip membrane protein 4 from Ricinus communis (Castor bean).